A 122-amino-acid chain; its full sequence is Large ribosomal subunit protein uL14 (122 aa).

The protein belongs to the universal ribosomal protein uL14 family. As to quaternary structure, part of the 50S ribosomal subunit. Forms a cluster with proteins L3 and L19. In the 70S ribosome, L14 and L19 interact and together make contacts with the 16S rRNA in bridges B5 and B8.

Its function is as follows. Binds to 23S rRNA. Forms part of two intersubunit bridges in the 70S ribosome. This chain is Large ribosomal subunit protein uL14, found in Ralstonia nicotianae (strain ATCC BAA-1114 / GMI1000) (Ralstonia solanacearum).